A 134-amino-acid chain; its full sequence is uncharacterized protein (134 aa).

This is an uncharacterized protein from Synechococcus elongatus (strain ATCC 33912 / PCC 7942 / FACHB-805) (Anacystis nidulans R2).